The primary structure comprises 297 residues: Inosose dehydratase (297 aa).

This sequence belongs to the IolE/MocC family. Glutathione is required as a cofactor. Co(2+) serves as cofactor. The cofactor is Mn(2+).

The enzyme catalyses scyllo-inosose = 3D-3,5/4-trihydroxycyclohexane-1,2-dione + H2O. It participates in polyol metabolism; myo-inositol degradation into acetyl-CoA; acetyl-CoA from myo-inositol: step 2/7. Functionally, catalyzes the dehydration of inosose (2-keto-myo-inositol, 2KMI or 2,4,6/3,5-pentahydroxycyclohexanone) to 3D-(3,5/4)-trihydroxycyclohexane-1,2-dione (D-2,3-diketo-4-deoxy-epi-inositol). This Clostridium perfringens (strain 13 / Type A) protein is Inosose dehydratase.